We begin with the raw amino-acid sequence, 148 residues long: Universal stress protein YxiE (148 aa).

Residues 1 to 18 form the signal peptide; sequence MFNKMLVAIDGSDMSAKA.

It belongs to the universal stress protein A family.

The chain is Universal stress protein YxiE (yxiE) from Bacillus subtilis (strain 168).